Reading from the N-terminus, the 366-residue chain is Peptide chain release factor 1 (366 aa).

Glutamine 239 is modified (N5-methylglutamine).

The protein belongs to the prokaryotic/mitochondrial release factor family. In terms of processing, methylated by PrmC. Methylation increases the termination efficiency of RF1.

It localises to the cytoplasm. In terms of biological role, peptide chain release factor 1 directs the termination of translation in response to the peptide chain termination codons UAG and UAA. In Baumannia cicadellinicola subsp. Homalodisca coagulata, this protein is Peptide chain release factor 1.